Consider the following 470-residue polypeptide: AAA-ATPase At5g40000 (470 aa).

An N-terminal signal peptide occupies residues 1 to 30; sequence MMMMGDSFGSIGSSMASLFFLWATIQQIFP. 248–255 lines the ATP pocket; that stretch reads GPPGTGKS.

This sequence belongs to the AAA ATPase family. BCS1 subfamily. It depends on Mg(2+) as a cofactor.

The enzyme catalyses ATP + H2O = ADP + phosphate + H(+). This is AAA-ATPase At5g40000 from Arabidopsis thaliana (Mouse-ear cress).